Reading from the N-terminus, the 1065-residue chain is Putative guanine nucleotide-exchange factor SED4 (1065 aa).

Residues 1–346 (MSGNSANYDV…SSSILRNIWK (346 aa)) lie on the Cytoplasmic side of the membrane. Serine 65 carries the post-translational modification Phosphoserine. WD repeat units lie at residues 259–298 (FDLNGITSMDVSPNKKFVALSSNDNLVAIVSVEKLKLVQL) and 302–341 (VHESTITKVTFSPDSRYLASTSMGNTINVLKLSGTSSSIL). A helical; Signal-anchor for type II membrane protein membrane pass occupies residues 347–365 (FFLNFVLLVVLAGAIQLGY). At 366-1065 (KHNVHGFIYK…VNYAGLHDEL (700 aa)) the chain is on the lumenal side. The N-linked (GlcNAc...) asparagine glycan is linked to asparagine 388. 3 disordered regions span residues 458-477 (TSADIPTSASSSSSSSSSSF), 482-520 (VTNEPIVSSPTSEITKPLASPTEPNIVEKPSLPLNSESI), and 551-625 (QSES…SFLD). Residues 465–476 (SASSSSSSSSSS) show a composition bias toward low complexity. Residues 482-495 (VTNEPIVSSPTSEI) show a composition bias toward polar residues. Residues 568–621 (STESPSLSHMPSSSSSSLSLSSSLTTSPTTALSTSTATAVTTTQTNPTNDAANT) are compositionally biased toward low complexity. N-linked (GlcNAc...) asparagine glycosylation is present at asparagine 620. 4 tandem repeats follow at residues 824-833 (IDNSEYTSVL), 834-843 (ADNLEPTSVL), 844-853 (ADNSEPTSVL), and 854-863 (ADSSEPTSVF). Residues 824–863 (IDNSEYTSVLADNLEPTSVLADNSEPTSVLADSSEPTSVF) are 4 X 10 AA tandem repeats. Asparagine 1039 is a glycosylation site (N-linked (GlcNAc...) asparagine). Positions 1062-1065 (HDEL) match the Prevents secretion from ER motif.

It belongs to the WD repeat SEC12 family.

The protein resides in the endoplasmic reticulum membrane. The protein localises to the golgi apparatus membrane. Its function is as follows. Putative guanine nucleotide-exchange factor (GEF) involved in the formation or budding of transport vesicles from the ER. Positive regulator of SAR1 probably through inhibition of the GTPase activation by SEC23. This is Putative guanine nucleotide-exchange factor SED4 (SED4) from Saccharomyces cerevisiae (strain ATCC 204508 / S288c) (Baker's yeast).